Consider the following 277-residue polypeptide: MNVFTTLQQFVPQQKISKVAGRLAASRHPWVKRTFIRSFAKAYDVSLDEYERQSLNAYESFNDFFTRELQDNARIIDASINGIVSPADGMISQLGQIHDHKLLQAKGRDYDIGQLLADSADGDYFADGSFATVYLAPSNYHRVHMPFDGILTKTRYVPGTLFSVNNTTAANVPDLFARNERLVCLFDTAYGKAAVVMVGAMIVAGIETVATGKISRTDDIQEADHDMSFKKGDELGRFYLGSTAIVVLPKAAKTDWQDTMQHGSIVQMGQLLGSAKT.

Catalysis depends on charge relay system; for autoendoproteolytic cleavage activity residues Asp88, His144, and Ser242. The active-site Schiff-base intermediate with substrate; via pyruvic acid; for decarboxylase activity is Ser242. At Ser242 the chain carries Pyruvic acid (Ser); by autocatalysis.

It belongs to the phosphatidylserine decarboxylase family. PSD-B subfamily. Prokaryotic type I sub-subfamily. As to quaternary structure, heterodimer of a large membrane-associated beta subunit and a small pyruvoyl-containing alpha subunit. Pyruvate serves as cofactor. Is synthesized initially as an inactive proenzyme. Formation of the active enzyme involves a self-maturation process in which the active site pyruvoyl group is generated from an internal serine residue via an autocatalytic post-translational modification. Two non-identical subunits are generated from the proenzyme in this reaction, and the pyruvate is formed at the N-terminus of the alpha chain, which is derived from the carboxyl end of the proenzyme. The autoendoproteolytic cleavage occurs by a canonical serine protease mechanism, in which the side chain hydroxyl group of the serine supplies its oxygen atom to form the C-terminus of the beta chain, while the remainder of the serine residue undergoes an oxidative deamination to produce ammonia and the pyruvoyl prosthetic group on the alpha chain. During this reaction, the Ser that is part of the protease active site of the proenzyme becomes the pyruvoyl prosthetic group, which constitutes an essential element of the active site of the mature decarboxylase.

The protein resides in the cell membrane. It catalyses the reaction a 1,2-diacyl-sn-glycero-3-phospho-L-serine + H(+) = a 1,2-diacyl-sn-glycero-3-phosphoethanolamine + CO2. It participates in phospholipid metabolism; phosphatidylethanolamine biosynthesis; phosphatidylethanolamine from CDP-diacylglycerol: step 2/2. Its function is as follows. Catalyzes the formation of phosphatidylethanolamine (PtdEtn) from phosphatidylserine (PtdSer). In Psychrobacter cryohalolentis (strain ATCC BAA-1226 / DSM 17306 / VKM B-2378 / K5), this protein is Phosphatidylserine decarboxylase proenzyme.